A 61-amino-acid polypeptide reads, in one-letter code: U-scoloptoxin(14)-Sm1a (61 aa).

The N-terminal stretch at 1–24 is a signal peptide; the sequence is MNPKLCMLLLVCLMAFYVIETVQA.

Belongs to the scoloptoxin-14 family. Contains 4 disulfide bonds. Expressed by the venom gland.

Its subcellular location is the secreted. The chain is U-scoloptoxin(14)-Sm1a from Scolopendra morsitans (Tanzanian blue ringleg centipede).